The sequence spans 99 residues: UPF0213 protein SP_1535 (99 aa).

Residues 3 to 78 (HKAYMYVLEC…KRKKRPQKEE (76 aa)) enclose the GIY-YIG domain.

The protein belongs to the UPF0213 family.

In Streptococcus pneumoniae serotype 4 (strain ATCC BAA-334 / TIGR4), this protein is UPF0213 protein SP_1535.